A 395-amino-acid polypeptide reads, in one-letter code: Putative pyridoxal phosphate-dependent acyltransferase (395 aa).

A pyridoxal 5'-phosphate-binding site is contributed by 110 to 111 (GF). His135 is a binding site for substrate. Pyridoxal 5'-phosphate is bound by residues Ser185, 210–213 (DDAH), and 240–243 (TLSK). Lys243 is modified (N6-(pyridoxal phosphate)lysine). Residue Thr357 coordinates substrate.

This sequence belongs to the class-II pyridoxal-phosphate-dependent aminotransferase family. As to quaternary structure, homodimer. It depends on pyridoxal 5'-phosphate as a cofactor.

The polypeptide is Putative pyridoxal phosphate-dependent acyltransferase (Staphylococcus aureus (strain COL)).